The sequence spans 609 residues: Isocitrate dehydrogenase kinase/phosphatase (609 aa).

ATP contacts are provided by residues 325–331 (APGIKGM) and Lys346. The active site involves Asp381.

This sequence belongs to the AceK family.

It localises to the cytoplasm. It carries out the reaction L-seryl-[isocitrate dehydrogenase] + ATP = O-phospho-L-seryl-[isocitrate dehydrogenase] + ADP + H(+). Functionally, bifunctional enzyme which can phosphorylate or dephosphorylate isocitrate dehydrogenase (IDH) on a specific serine residue. This is a regulatory mechanism which enables bacteria to bypass the Krebs cycle via the glyoxylate shunt in response to the source of carbon. When bacteria are grown on glucose, IDH is fully active and unphosphorylated, but when grown on acetate or ethanol, the activity of IDH declines drastically concomitant with its phosphorylation. This Acidovorax sp. (strain JS42) protein is Isocitrate dehydrogenase kinase/phosphatase.